The following is a 68-amino-acid chain: Beta-defensin 1 (68 aa).

The first 21 residues, 1-21, serve as a signal peptide directing secretion; sequence MRTSYLLLFTLCLLLSEMASG. Residues 22 to 32 constitute a propeptide that is removed on maturation; that stretch reads DNFLTGLGHRS. Disulfide bonds link C37–C66, C44–C59, and C49–C67.

The protein belongs to the beta-defensin family. Monomer. Homodimer.

The protein resides in the secreted. The protein localises to the membrane. Has bactericidal activity. May act as a ligand for C-C chemokine receptor CCR6. Positively regulates the sperm motility and bactericidal activity in a CCR6-dependent manner. Binds to CCR6 and triggers Ca2+ mobilization in the sperm which is important for its motility. The sequence is that of Beta-defensin 1 (DEFB1) from Hylobates moloch (Silvery gibbon).